The following is a 908-amino-acid chain: NADH-quinone oxidoreductase subunit G (908 aa).

The region spanning 2–83 (ATIHVDGKEY…GTFISIDDEE (82 aa)) is the 2Fe-2S ferredoxin-type domain. [2Fe-2S] cluster contacts are provided by Cys-34, Cys-45, Cys-48, and Cys-67. In terms of domain architecture, 4Fe-4S His(Cys)3-ligated-type spans 83–122 (EAKQFRESVVEWLMTNHPHDCPVCEEGGNCHLQDMTVMTG). His-99, Cys-103, Cys-106, Cys-112, Cys-151, Cys-154, Cys-157, Cys-201, Cys-228, Cys-231, Cys-235, and Cys-263 together coordinate [4Fe-4S] cluster. Positions 221-277 (MQFAPSICQQCSIGCNISPGERYGELRRIENRYNGTVNHYFLCDRGRFGYGYVNLKD) constitute a 4Fe-4S Mo/W bis-MGD-type domain.

Belongs to the complex I 75 kDa subunit family. Composed of 13 different subunits. Subunits NuoCD, E, F, and G constitute the peripheral sector of the complex. [2Fe-2S] cluster serves as cofactor. Requires [4Fe-4S] cluster as cofactor.

It catalyses the reaction a quinone + NADH + 5 H(+)(in) = a quinol + NAD(+) + 4 H(+)(out). Its function is as follows. NDH-1 shuttles electrons from NADH, via FMN and iron-sulfur (Fe-S) centers, to quinones in the respiratory chain. The immediate electron acceptor for the enzyme in this species is believed to be ubiquinone. Couples the redox reaction to proton translocation (for every two electrons transferred, four hydrogen ions are translocated across the cytoplasmic membrane), and thus conserves the redox energy in a proton gradient. This Salmonella typhi protein is NADH-quinone oxidoreductase subunit G (nuoG).